The primary structure comprises 187 residues: Large ribosomal subunit protein uL18 (187 aa).

This sequence belongs to the universal ribosomal protein uL18 family. As to quaternary structure, part of the 50S ribosomal subunit. Interacts with proteins L5 and L21e, and attaches the 5S rRNA to the 23S rRNA. Has been cross-linked to L21e.

This is one of 5 proteins that mediate the attachment of the 5S rRNA onto the large ribosomal subunit, where it forms part of the central protuberance and stabilizes the orientation of adjacent RNA domains. The polypeptide is Large ribosomal subunit protein uL18 (rpl18) (Haloarcula marismortui (strain ATCC 43049 / DSM 3752 / JCM 8966 / VKM B-1809) (Halobacterium marismortui)).